The following is a 350-amino-acid chain: Probable dual-specificity RNA methyltransferase RlmN (350 aa).

The Radical SAM core domain maps to 105–342 (ANGKNSVCIS…VRQSKGANIN (238 aa)). C112 and C345 are disulfide-bonded. The [4Fe-4S] cluster site is built by C119, C123, and C126. Residues 166 to 167 (GE), S198, 221 to 223 (SLH), and N302 contribute to the S-adenosyl-L-methionine site. The S-methylcysteine intermediate role is filled by C345.

Belongs to the radical SAM superfamily. RlmN family. The cofactor is [4Fe-4S] cluster.

The protein resides in the cytoplasm. It carries out the reaction adenosine(2503) in 23S rRNA + 2 reduced [2Fe-2S]-[ferredoxin] + 2 S-adenosyl-L-methionine = 2-methyladenosine(2503) in 23S rRNA + 5'-deoxyadenosine + L-methionine + 2 oxidized [2Fe-2S]-[ferredoxin] + S-adenosyl-L-homocysteine. It catalyses the reaction adenosine(37) in tRNA + 2 reduced [2Fe-2S]-[ferredoxin] + 2 S-adenosyl-L-methionine = 2-methyladenosine(37) in tRNA + 5'-deoxyadenosine + L-methionine + 2 oxidized [2Fe-2S]-[ferredoxin] + S-adenosyl-L-homocysteine. In terms of biological role, specifically methylates position 2 of adenine 2503 in 23S rRNA and position 2 of adenine 37 in tRNAs. The protein is Probable dual-specificity RNA methyltransferase RlmN of Endomicrobium trichonymphae.